A 284-amino-acid chain; its full sequence is MRYTGLMGTLLTLVNLLQLAGTLRIAAFNIRTFGETKMSNATLSVYFVKILSRYDIAVIQEVRDSHLVAVGKLLDELNRDKPDTYRYVVSEPLGRKSYKEQYLFVYRPDQVSILDSYQYDDGCEPCGNDTFSREPAIVKFFSPYTEVQEFAIVPLHAAPTEAVSEIDALYDVYLDVWQKWGLEDIMFMGDFNAGCSYVTSSQWSSIRLRTSPIFQWLIPDSADTTVTSTHCAYDRIVVAGALLQAAVVPNSAVPFDFQAEYGLSNQLAEAISDHYPVEVTLRKI.

The first 22 residues, 1–22 (MRYTGLMGTLLTLVNLLQLAGT), serve as a signal peptide directing secretion. Asn-40 carries an N-linked (GlcNAc...) asparagine glycan. The active site involves Glu-100. Cys-123 and Cys-126 are joined by a disulfide. Asn-128 carries N-linked (GlcNAc...) asparagine glycosylation. His-156 is an active-site residue. Cys-195 and Cys-231 are disulfide-bonded.

Belongs to the DNase I family. Ca(2+) serves as cofactor. It depends on Mg(2+) as a cofactor. N-glycosylated. In terms of tissue distribution, highly expressed in the parotid and submandibular gland as well as in the kidney and duodenum (at protein level). Expressed at intermediate level in the ileum, mesenterial lymph nodes, liver, ventral prostate, epididymis, ovary and stomach (at protein level). Expressed at low level in the sublingual, preputial, coagulation and pituitary gland (at protein level). Also present in the lachrymal and thyroid glands, striated muscle, intestine, the urinary bladder and the eye.

The protein localises to the secreted. It localises to the zymogen granule. It is found in the nucleus envelope. It carries out the reaction Endonucleolytic cleavage to 5'-phosphodinucleotide and 5'-phosphooligonucleotide end-products.. In terms of biological role, serum endocuclease secreted into body fluids by a wide variety of exocrine and endocrine organs. Expressed by non-hematopoietic tissues and preferentially cleaves protein-free DNA. Among other functions, seems to be involved in cell death by apoptosis. Binds specifically to G-actin and blocks actin polymerization. Together with DNASE1L3, plays a key role in degrading neutrophil extracellular traps (NETs). NETs are mainly composed of DNA fibers and are released by neutrophils to bind pathogens during inflammation. Degradation of intravascular NETs by DNASE1 and DNASE1L3 is required to prevent formation of clots that obstruct blood vessels and cause organ damage following inflammation. The sequence is that of Deoxyribonuclease-1 from Mus musculus (Mouse).